Consider the following 1242-residue polypeptide: DNA-directed RNA polymerase RPB2 homolog (1242 aa).

The C4-type zinc-finger motif lies at 1180–1201 (CRNCGEPAIYNASHPIYKCMNC).

It belongs to the RNA polymerase beta chain family. As to quaternary structure, part of the viral DNA-directed RNA polymerase that consists of 8 polII-like subunits (RPB1, RPB2, RPB3, RPB5, RPB6, RPB7, RPB9, RPB10), a capping enzyme and a termination factor.

The protein resides in the host cytoplasm. Its subcellular location is the virion. The enzyme catalyses RNA(n) + a ribonucleoside 5'-triphosphate = RNA(n+1) + diphosphate. Functionally, catalytic component of the DNA-directed RNA polymerase (RNAP) that catalyzes the transcription in the cytoplasm of viral DNA into RNA using the four ribonucleoside triphosphates as substrates. Forms the polymerase active center together with RPB1. Part of the core element with the central large cleft, the clamp element that moves to open and close the cleft and the jaws that are thought to grab the incoming DNA template. The chain is DNA-directed RNA polymerase RPB2 homolog from African swine fever virus (isolate Pig/Kenya/KEN-50/1950) (ASFV).